Here is a 145-residue protein sequence, read N- to C-terminus: D-aminoacyl-tRNA deacylase (145 aa).

A Gly-cisPro motif, important for rejection of L-amino acids motif is present at residues 137-138 (GP).

Belongs to the DTD family. Homodimer.

It is found in the cytoplasm. The enzyme catalyses glycyl-tRNA(Ala) + H2O = tRNA(Ala) + glycine + H(+). It carries out the reaction a D-aminoacyl-tRNA + H2O = a tRNA + a D-alpha-amino acid + H(+). An aminoacyl-tRNA editing enzyme that deacylates mischarged D-aminoacyl-tRNAs. Also deacylates mischarged glycyl-tRNA(Ala), protecting cells against glycine mischarging by AlaRS. Acts via tRNA-based rather than protein-based catalysis; rejects L-amino acids rather than detecting D-amino acids in the active site. By recycling D-aminoacyl-tRNA to D-amino acids and free tRNA molecules, this enzyme counteracts the toxicity associated with the formation of D-aminoacyl-tRNA entities in vivo and helps enforce protein L-homochirality. This Salmonella arizonae (strain ATCC BAA-731 / CDC346-86 / RSK2980) protein is D-aminoacyl-tRNA deacylase.